The sequence spans 92 residues: N(2)-fixation sustaining protein CowN (92 aa).

This sequence belongs to the CowN family.

Is required to sustain N(2)-dependent growth in the presence of low levels of carbon monoxide (CO). Probably acts by protecting the N(2) fixation ability of the nitrogenase complex, which is inactivated in the presence of CO. The polypeptide is N(2)-fixation sustaining protein CowN (Cereibacter sphaeroides (strain KD131 / KCTC 12085) (Rhodobacter sphaeroides)).